A 362-amino-acid chain; its full sequence is MKIKKIKLLKALALTGAFGIVATVPVIVSSCSSTSENNGNGNGNGGTDGNTQQTEVTPAIKSEVSLTGALSKIYDTKTGTDRETTSQLIVKDIKANPENYFTNGEALKDVIASATVTVDGGFTESTFTGEAYSVWSAKADVKKGTYSQASKQLDIKSINDLQTVLGDSAAIKGICDLIPNLKLNNGTDYKVTNNGLSLSEDLLHINVTAKDGQTDVSMDLAIPVSDLNLKIDGLKISVSGTGIKTSELTTNYKFNIGIDNTVKTLTPAAVTLAEADRTNAEKVLEKLGYATVSGSTYTLDQDKLADALGLYNCKFEAVKSEKDSTNNNKYTVTLKATPNDGYFWEDGTNGAKEEISFVATFS.

Positions 1 to 30 are cleaved as a signal peptide; that stretch reads MKIKKIKLLKALALTGAFGIVATVPVIVSS. A lipid anchor (N-palmitoyl cysteine) is attached at C31. Residue C31 is the site of S-diacylglycerol cysteine attachment. Residues 33–53 form a disordered region; the sequence is STSENNGNGNGNGGTDGNTQQ.

Belongs to the p35 lipoprotein family. Post-translationally, the N-terminus is blocked.

The protein localises to the cell membrane. Its function is as follows. Major M.penetrans antigen. The polypeptide is Lipoprotein p35 (Malacoplasma penetrans (Mycoplasma penetrans)).